The chain runs to 89 residues: MAVTVAQKAQIVQDYQRAAADTGSPEVQVALLTARINDLTGHFKANIKDHHSRRGLLKMVSRRRKLLDYLKRTNLESYKTLIERLGLRK.

This sequence belongs to the universal ribosomal protein uS15 family. In terms of assembly, part of the 30S ribosomal subunit. Forms a bridge to the 50S subunit in the 70S ribosome, contacting the 23S rRNA.

Functionally, one of the primary rRNA binding proteins, it binds directly to 16S rRNA where it helps nucleate assembly of the platform of the 30S subunit by binding and bridging several RNA helices of the 16S rRNA. Forms an intersubunit bridge (bridge B4) with the 23S rRNA of the 50S subunit in the ribosome. The protein is Small ribosomal subunit protein uS15 of Thiobacillus denitrificans (strain ATCC 25259 / T1).